The primary structure comprises 335 residues: Ketol-acid reductoisomerase (NADP(+)) (335 aa).

The KARI N-terminal Rossmann domain occupies 1-182; the sequence is MATIIYDDET…GATRAGVYET (182 aa). NADP(+) is bound by residues 25 to 28, R48, S51, S53, and 83 to 86; these read YGSQ and DEKQ. The active site involves H108. G134 is an NADP(+) binding site. Residues 183–328 form the KARI C-terminal knotted domain; that stretch reads TFREETETDL…KQIRANIPWL (146 aa). D191, E195, E227, and E231 together coordinate Mg(2+). S252 contributes to the substrate binding site.

This sequence belongs to the ketol-acid reductoisomerase family. It depends on Mg(2+) as a cofactor.

It catalyses the reaction (2R)-2,3-dihydroxy-3-methylbutanoate + NADP(+) = (2S)-2-acetolactate + NADPH + H(+). The catalysed reaction is (2R,3R)-2,3-dihydroxy-3-methylpentanoate + NADP(+) = (S)-2-ethyl-2-hydroxy-3-oxobutanoate + NADPH + H(+). Its pathway is amino-acid biosynthesis; L-isoleucine biosynthesis; L-isoleucine from 2-oxobutanoate: step 2/4. It participates in amino-acid biosynthesis; L-valine biosynthesis; L-valine from pyruvate: step 2/4. Involved in the biosynthesis of branched-chain amino acids (BCAA). Catalyzes an alkyl-migration followed by a ketol-acid reduction of (S)-2-acetolactate (S2AL) to yield (R)-2,3-dihydroxy-isovalerate. In the isomerase reaction, S2AL is rearranged via a Mg-dependent methyl migration to produce 3-hydroxy-3-methyl-2-ketobutyrate (HMKB). In the reductase reaction, this 2-ketoacid undergoes a metal-dependent reduction by NADPH to yield (R)-2,3-dihydroxy-isovalerate. The chain is Ketol-acid reductoisomerase (NADP(+)) from Methanosarcina mazei (strain ATCC BAA-159 / DSM 3647 / Goe1 / Go1 / JCM 11833 / OCM 88) (Methanosarcina frisia).